The primary structure comprises 194 residues: Imidazoleglycerol-phosphate dehydratase (194 aa).

It belongs to the imidazoleglycerol-phosphate dehydratase family.

The protein resides in the cytoplasm. The catalysed reaction is D-erythro-1-(imidazol-4-yl)glycerol 3-phosphate = 3-(imidazol-4-yl)-2-oxopropyl phosphate + H2O. Its pathway is amino-acid biosynthesis; L-histidine biosynthesis; L-histidine from 5-phospho-alpha-D-ribose 1-diphosphate: step 6/9. The protein is Imidazoleglycerol-phosphate dehydratase of Bacillus anthracis (strain A0248).